The chain runs to 294 residues: 4-hydroxy-tetrahydrodipicolinate synthase (294 aa).

A pyruvate-binding site is contributed by threonine 45. Tyrosine 133 functions as the Proton donor/acceptor in the catalytic mechanism. Lysine 161 functions as the Schiff-base intermediate with substrate in the catalytic mechanism. Isoleucine 203 contacts pyruvate.

The protein belongs to the DapA family. As to quaternary structure, homotetramer; dimer of dimers.

It localises to the cytoplasm. It carries out the reaction L-aspartate 4-semialdehyde + pyruvate = (2S,4S)-4-hydroxy-2,3,4,5-tetrahydrodipicolinate + H2O + H(+). The protein operates within amino-acid biosynthesis; L-lysine biosynthesis via DAP pathway; (S)-tetrahydrodipicolinate from L-aspartate: step 3/4. Functionally, catalyzes the condensation of (S)-aspartate-beta-semialdehyde [(S)-ASA] and pyruvate to 4-hydroxy-tetrahydrodipicolinate (HTPA). This Shewanella frigidimarina (strain NCIMB 400) protein is 4-hydroxy-tetrahydrodipicolinate synthase.